Reading from the N-terminus, the 92-residue chain is Putative protein pog (92 aa).

The protein is Putative protein pog of Acute bee paralysis virus (strain Rothamsted) (ABPV).